A 242-amino-acid chain; its full sequence is MLDMNPQETYTAPEEVNTPSRPIDENALLQRHQVMVKRVVNQLRVHATSHCSIEDMQQIGLIALVEAGRRYGDIDDTHFPAFAVCRVRGAILDELRRLDWRSRKTRQQAHELNDVTRDLTRSLGRMPTDSEIIKALGTDEQDYYNRQNAALAGEMQSLDQLMENSTDSHFGGQYDGMEHEHIRRSLDSALGRLSKRDQLLLTLFYQHELNLHEIALVLDLTPPRICQLHKQALKQLNQLMSS.

Positions 55 to 68 (DMQQIGLIALVEAG) match the Polymerase core binding motif. The H-T-H motif DNA-binding region spans 211–230 (LHEIALVLDLTPPRICQLHK).

The protein belongs to the sigma-70 factor family.

Its function is as follows. Sigma factors are initiation factors that promote the attachment of RNA polymerase to specific initiation sites and are then released. This alternative sigma factor is specific for the flagellin gene (fliC) expression. This is RNA polymerase sigma factor for flagellar operon (lafS) from Vibrio parahaemolyticus serotype O3:K6 (strain RIMD 2210633).